Consider the following 663-residue polypeptide: Protein THEMIS2 (663 aa).

CABIT regions lie at residues 2–237 and 238–515; these read EPVP…TASS and QHIH…EAEG. Positions 545-663 are disordered; the sequence is ASESQAPPPR…DMDDHDYEEI (119 aa). Polar residues predominate over residues 559 to 577; it reads QGINKKQQNIQSCKESSVK. Residue threonine 596 is modified to Phosphothreonine. Residues 621 to 641 show a composition bias toward polar residues; it reads NPQTQNSVLSMKPKTSSSLGK. Positions 653–663 are enriched in acidic residues; that stretch reads PDMDDHDYEEI. Tyrosine 660 is modified (phosphotyrosine).

Belongs to the themis family. Interacts with VAV1. Interacts with LAT. Interacts constitutively with GRB2, LYN and PLCG2; these interactions increase the activation of PLCG2 and its downstream pathways following B cell receptor stimulation. In terms of processing, phosphorylation at Tyr-660 is induced by LPS. Phosphorylated by Src kinases (Lck or Fyn) following BCR engagement. As to expression, expressed in both developing and mature B-cells with high expression in immature, follicular and B1 B cells. Also expressed in macrophages and dendritic cells. Down-regulated in splenocytes of mice developing arthritis in a collagen-induced model, not in those of mice failing to develop the disease. Transiently down-regulated in splenocytes of mice infected with influenza virus.

It is found in the nucleus. The protein localises to the cytoplasm. Functionally, may constitute a control point in macrophage inflammatory response, promoting LPS-induced TLR4-mediated TNF production. Determines the threshold for activation of B cells by low-affinity and low-avidity ligands via PLCG2 activation and its downstream pathways. The sequence is that of Protein THEMIS2 from Mus musculus (Mouse).